Here is a 422-residue protein sequence, read N- to C-terminus: Dihydroorotase (422 aa).

Histidine 53 and histidine 55 together coordinate Zn(2+). Residues 55 to 57 (HFR) and asparagine 87 each bind substrate. The Zn(2+) site is built by glutamate 138, histidine 172, histidine 223, and aspartate 291. Aspartate 291 is an active-site residue. Residue histidine 295 coordinates substrate.

It belongs to the metallo-dependent hydrolases superfamily. DHOase family. Class I DHOase subfamily. Requires Zn(2+) as cofactor.

The catalysed reaction is (S)-dihydroorotate + H2O = N-carbamoyl-L-aspartate + H(+). The protein operates within pyrimidine metabolism; UMP biosynthesis via de novo pathway; (S)-dihydroorotate from bicarbonate: step 3/3. In terms of biological role, catalyzes the reversible cyclization of carbamoyl aspartate to dihydroorotate. This is Dihydroorotase from Halobacterium salinarum (strain ATCC 700922 / JCM 11081 / NRC-1) (Halobacterium halobium).